A 318-amino-acid polypeptide reads, in one-letter code: Magnetosome protein MamM (318 aa).

A transmembrane domain (TMD) region spans residues 1–210 (MRKSGCAVCS…FMDAYRGLMD (210 aa)). 4 helical membrane passes run 13–33 (IGWVGLAVSTVLMVMKAFVGL), 39–59 (AMLADAMYSLKDMLNALMVII), 81–101 (FILSMVVSVVFIVLTGYLLVH), and 117–137 (LIVLWAALVSIGVNVGMYFYS). The segment at 211 to 318 (HTAGEAVQNR…DEVMLSKVDN (108 aa)) is C-terminal domain (CTD). Fe cation-binding residues include Asp249, His264, His285, and Glu289.

The protein belongs to the cation diffusion facilitator (CDF) transporter (TC 2.A.4) family. In terms of assembly, forms homodimers via its C-terminal domain (CTD) in the presence of metal cations. Interacts with MamB via their CTD. Isolated CTD forms homodimers.

The protein localises to the magnetosome membrane. Its subcellular location is the cell inner membrane. In terms of biological role, essential for magnetosome formation; required for stable accumulation of MamB. May nucleate iron crystal formation. Probably binds and transports iron. Binds divalent cations, possibly up to 3 Zn(2+) per dimer in vitro, probably iron in vivo. One of 7 genes (mamLQBIEMO) able to induce magnetosome membrane biogenesis; coexpression of mamLQRBIEMO in a deletion of the 17 gene mamAB operon restores magnetosome vesicle formation but not magnetite biosynthesis. The sequence is that of Magnetosome protein MamM from Magnetospirillum gryphiswaldense (strain DSM 6361 / JCM 21280 / NBRC 15271 / MSR-1).